The primary structure comprises 942 residues: MAYHYSHDSDRRQPHGGYNYPSNYSNPSQYSIPDSVYSGHSTNTPRVPSPGGYHQQPSPTTRAVNPAYYQPQPTASSMTSHDLMYGRPSPGPNQYGAAPADVVRGPGATTVPLSQQAPYQPYPSHTDYSDEDKSFASTTHLVSPQKEWGVGSVVPVTTIPPVNQLPYQPYQAYPPRPSPSPITHRGGTSHWHAMRKQLLERRVIKQIPLHNGNLVMDVPVPKGVIPSTKGLGVMDGEMDSMRYSAATCDPDDFMGSKFSLRQYLYGRKTELFIVMTMYNENSELLLRTLNAVIKNIAHLTTRTRSKTWGPDSWKKVVVCIVADGRKVVDPRVLKVLQLMGVYAEGVMKDHVVDKETQAHIFEYTSQVVVSETGEVGFGSTPIQLLFCLKEQNKKKLNSHRWFFNAFGPLIKPNVCVLLDVGTKPSGHSIYELYKCFEKHPTVGGACGEIFADTGKWGKYLWNPLVAGQNFEYKMSNILDKPFESVFGLISVLPGAFSAYRYDAVANHADGTGPLAAYFRGELMNQPGATATIFDRNKFLAEDRILAFEIVVKKNARWRLQYVKAAKAGTDVPATVPEFISQRRRWLNGSIFAATYAMVCFWRIWTSGHGIFRKFTLTFLTIYNLFNLLFNWLSVSSFYLAFFFLISSSISGSSDPFNGAGDEIFQVFNKVYIALIFVVLVCSLGNRPQGSNYMYTFCIFMFAVCQGILLYCAGWTVYQTVPHTSEGWEDVSGLFENRTFVQLALSLMATYGLYLISSLLYFEPWHMLTSFVQYLLLLPSYVNILLIYAMCNLHDVSWGTKGDNGSSKDLGAAKKVEKDGKEMAEVALPTKQEDVEALWQQARQELRVPVKEKAEKRSPETKRADEDRNFRTNVVLLFLGSNMLIILLFTSSTFTNWVNSHFVDATSSTFNPYLTVIFYAVLGLSALRFAGCLLYLIFRMFGY.

The segment covering 1 to 13 has biased composition (basic and acidic residues); sequence MAYHYSHDSDRRQ. Positions 1–132 are disordered; that stretch reads MAYHYSHDSD…PSHTDYSDED (132 aa). The span at 18 to 33 shows a compositional bias: low complexity; that stretch reads YNYPSNYSNPSQYSIP. The N-linked (GlcNAc...) asparagine glycan is linked to Asn23. Over residues 71–80 the composition is skewed to polar residues; it reads PQPTASSMTS. An N-linked (GlcNAc...) asparagine glycan is attached at Asn587. The next 4 membrane-spanning stretches (helical) occupy residues 590–610, 625–645, 663–683, and 696–716; these read IFAA…GHGI, FNLL…FFLI, IFQV…VCSL, and FCIF…GWTV. Residue Asn736 is glycosylated (N-linked (GlcNAc...) asparagine). The next 2 helical transmembrane spans lie at 739–759 and 770–790; these read FVQL…SSLL and FVQY…YAMC. Asn803 carries N-linked (GlcNAc...) asparagine glycosylation. The next 2 helical transmembrane spans lie at 873-893 and 916-936; these read VVLL…SSTF and IFYA…LYLI.

It belongs to the chitin synthase family. Class III subfamily.

It is found in the cell membrane. The catalysed reaction is [(1-&gt;4)-N-acetyl-beta-D-glucosaminyl](n) + UDP-N-acetyl-alpha-D-glucosamine = [(1-&gt;4)-N-acetyl-beta-D-glucosaminyl](n+1) + UDP + H(+). In terms of biological role, polymerizes chitin, a structural polymer of the cell wall and septum, by transferring the sugar moiety of UDP-GlcNAc to the non-reducing end of the growing chitin polymer. This Cryptococcus neoformans var. grubii serotype A (strain H99 / ATCC 208821 / CBS 10515 / FGSC 9487) (Filobasidiella neoformans var. grubii) protein is Chitin synthase 2.